We begin with the raw amino-acid sequence, 651 residues long: Coiled-coil domain-containing protein 81 (651 aa).

The interval 194–314 (LSSRESFGKR…PKTSPAPACQ (121 aa)) is disordered. At serine 206 the chain carries Phosphoserine. Basic and acidic residues-rich tracts occupy residues 212-222 (RIEHKETENKP) and 232-250 (GENR…KEEG). The segment covering 265–275 (SISPAKVTSGS) has biased composition (polar residues). Residues serine 273, serine 275, serine 294, and serine 416 each carry the phosphoserine modification. Coiled-coil stretches lie at residues 428–465 (SQSL…EELA) and 539–566 (KRNT…EHLA).

It localises to the cytoplasm. Its subcellular location is the cytoskeleton. The protein resides in the microtubule organizing center. The protein localises to the centrosome. This is Coiled-coil domain-containing protein 81 (Ccdc81) from Rattus norvegicus (Rat).